Consider the following 311-residue polypeptide: Pantothenate kinase (311 aa).

An ATP-binding site is contributed by 93–100 (GSVAVGKS).

This sequence belongs to the prokaryotic pantothenate kinase family.

The protein resides in the cytoplasm. The catalysed reaction is (R)-pantothenate + ATP = (R)-4'-phosphopantothenate + ADP + H(+). It functions in the pathway cofactor biosynthesis; coenzyme A biosynthesis; CoA from (R)-pantothenate: step 1/5. This is Pantothenate kinase (coaA) from Haemophilus influenzae (strain ATCC 51907 / DSM 11121 / KW20 / Rd).